The sequence spans 806 residues: Glycerol-3-phosphate acyltransferase (806 aa).

Positions 305-310 match the HXXXXD motif motif; that stretch reads CHRSHM.

Belongs to the GPAT/DAPAT family.

Its subcellular location is the cell inner membrane. The catalysed reaction is sn-glycerol 3-phosphate + an acyl-CoA = a 1-acyl-sn-glycero-3-phosphate + CoA. It functions in the pathway phospholipid metabolism; CDP-diacylglycerol biosynthesis; CDP-diacylglycerol from sn-glycerol 3-phosphate: step 1/3. The sequence is that of Glycerol-3-phosphate acyltransferase from Escherichia fergusonii (strain ATCC 35469 / DSM 13698 / CCUG 18766 / IAM 14443 / JCM 21226 / LMG 7866 / NBRC 102419 / NCTC 12128 / CDC 0568-73).